The primary structure comprises 465 residues: ATP synthase subunit beta (465 aa).

148 to 155 lines the ATP pocket; sequence GGAGVGKT.

Belongs to the ATPase alpha/beta chains family. F-type ATPases have 2 components, CF(1) - the catalytic core - and CF(0) - the membrane proton channel. CF(1) has five subunits: alpha(3), beta(3), gamma(1), delta(1), epsilon(1). CF(0) has three main subunits: a(1), b(2) and c(9-12). The alpha and beta chains form an alternating ring which encloses part of the gamma chain. CF(1) is attached to CF(0) by a central stalk formed by the gamma and epsilon chains, while a peripheral stalk is formed by the delta and b chains.

The protein localises to the cell inner membrane. It carries out the reaction ATP + H2O + 4 H(+)(in) = ADP + phosphate + 5 H(+)(out). Its function is as follows. Produces ATP from ADP in the presence of a proton gradient across the membrane. The catalytic sites are hosted primarily by the beta subunits. The sequence is that of ATP synthase subunit beta from Chromobacterium violaceum (strain ATCC 12472 / DSM 30191 / JCM 1249 / CCUG 213 / NBRC 12614 / NCIMB 9131 / NCTC 9757 / MK).